Here is a 40-residue protein sequence, read N- to C-terminus: RapK inhibitor (40 aa).

2 consecutive propeptides follow at residues 1–34 (MKKLVLCVSILAVILSGVALTQLSTDSPSNIQVA) and Gly40.

This sequence belongs to the Phr family. Post-translationally, contains a predicted signal peptide cleavage site in the N-terminal region, however the propeptide is probably only subject to processing events at the ends of the mature peptide.

Its subcellular location is the secreted. The protein resides in the cytoplasm. Its function is as follows. Signaling molecule involved in the regulation of genetic competence development. Secreted during production, but the mature peptide acts intracellularly, indicating that it needs to be imported into the cell to function. Stimulates expression of the genes controlled by ComA, a transcriptional factor that regulates the development of genetic competence. Acts by inhibiting RapK, which regulates the activity of ComA. The polypeptide is RapK inhibitor (phrK) (Bacillus subtilis (strain 168)).